The primary structure comprises 308 residues: tRNA pseudouridine synthase B (308 aa).

D47 functions as the Nucleophile in the catalytic mechanism.

Belongs to the pseudouridine synthase TruB family. Type 1 subfamily.

It carries out the reaction uridine(55) in tRNA = pseudouridine(55) in tRNA. Its function is as follows. Responsible for synthesis of pseudouridine from uracil-55 in the psi GC loop of transfer RNAs. In Rhodospirillum rubrum (strain ATCC 11170 / ATH 1.1.1 / DSM 467 / LMG 4362 / NCIMB 8255 / S1), this protein is tRNA pseudouridine synthase B.